The chain runs to 753 residues: Synaptotagmin-like protein 5 (753 aa).

The region spanning 7-123 is the RabBD domain; the sequence is FINLSFLLDH…IISGEWFLEE (117 aa). Residues 64–106 form an FYVE-type zinc finger; that stretch reads CVHCHKTLGLIFDRGDPCQACSLRVCSECRVTGLDGSWKCTVC. 3 disordered regions span residues 145–279, 297–359, and 380–404; these read RRSP…SREH, LTKS…LNSL, and LASG…VPDA. Position 147 is a phosphoserine (Ser147). Residues 150–174 show a composition bias toward polar residues; that stretch reads SEETQNQEQAQQCVDKSDTLSSVRQ. The segment covering 195 to 206 has biased composition (basic and acidic residues); the sequence is TRGEIRTPKPES. The span at 214 to 223 shows a compositional bias: polar residues; the sequence is LDSQNLQSFK. Positions 224-237 are enriched in low complexity; the sequence is SASGSDRGSTTSSD. Residues 249–275 are compositionally biased toward polar residues; it reads KSSYSNGGIPVTQRSPVPSAHSVTSIN. The segment covering 380–391 has biased composition (polar residues); that stretch reads LASGLSTNSQAG. C2 domains lie at 429–550 and 597–717; these read VTGE…DEWF and KRGK…VDWM.

As to quaternary structure, binds RAB27A that has been activated by GTP-binding.

It localises to the membrane. Functionally, may act as Rab effector protein and play a role in vesicle trafficking. Binds phospholipids. This Mus musculus (Mouse) protein is Synaptotagmin-like protein 5 (Sytl5).